Here is a 215-residue protein sequence, read N- to C-terminus: Cytochrome b6 (215 aa).

A helical membrane pass occupies residues 32–52; sequence IFYCLGGITLTCFLVQVATGF. Cysteine 35 serves as a coordination point for heme c. The heme b site is built by histidine 86 and histidine 100. The next 3 helical transmembrane spans lie at 90–110, 116–136, and 186–206; these read ASMM…TGGF, LTWV…VTGY, and LHTF…FLMI. Heme b-binding residues include histidine 187 and histidine 202.

It belongs to the cytochrome b family. PetB subfamily. As to quaternary structure, the 4 large subunits of the cytochrome b6-f complex are cytochrome b6, subunit IV (17 kDa polypeptide, PetD), cytochrome f and the Rieske protein, while the 4 small subunits are PetG, PetL, PetM and PetN. The complex functions as a dimer. Heme b is required as a cofactor. It depends on heme c as a cofactor.

The protein resides in the plastid. It is found in the chloroplast thylakoid membrane. In terms of biological role, component of the cytochrome b6-f complex, which mediates electron transfer between photosystem II (PSII) and photosystem I (PSI), cyclic electron flow around PSI, and state transitions. This Klebsormidium bilatum (Filamentous green alga) protein is Cytochrome b6.